Here is a 474-residue protein sequence, read N- to C-terminus: tRNA-2-methylthio-N(6)-dimethylallyladenosine synthase (474 aa).

The region spanning 3–120 (KKLLIKTWGC…LPEMIRQSQS (118 aa)) is the MTTase N-terminal domain. Residues cysteine 12, cysteine 49, cysteine 83, cysteine 157, cysteine 161, and cysteine 164 each coordinate [4Fe-4S] cluster. Positions 143-375 (KAEGATAFVS…QQQVNSQAMR (233 aa)) constitute a Radical SAM core domain. The TRAM domain occupies 378–441 (RLMLDTEQRV…ANSLRGELVR (64 aa)).

The protein belongs to the methylthiotransferase family. MiaB subfamily. Monomer. The cofactor is [4Fe-4S] cluster.

It is found in the cytoplasm. It carries out the reaction N(6)-dimethylallyladenosine(37) in tRNA + (sulfur carrier)-SH + AH2 + 2 S-adenosyl-L-methionine = 2-methylsulfanyl-N(6)-dimethylallyladenosine(37) in tRNA + (sulfur carrier)-H + 5'-deoxyadenosine + L-methionine + A + S-adenosyl-L-homocysteine + 2 H(+). Its function is as follows. Catalyzes the methylthiolation of N6-(dimethylallyl)adenosine (i(6)A), leading to the formation of 2-methylthio-N6-(dimethylallyl)adenosine (ms(2)i(6)A) at position 37 in tRNAs that read codons beginning with uridine. In Aliivibrio fischeri (strain ATCC 700601 / ES114) (Vibrio fischeri), this protein is tRNA-2-methylthio-N(6)-dimethylallyladenosine synthase.